We begin with the raw amino-acid sequence, 216 residues long: Probable nicotinate-nucleotide adenylyltransferase (216 aa).

This sequence belongs to the NadD family.

It carries out the reaction nicotinate beta-D-ribonucleotide + ATP + H(+) = deamido-NAD(+) + diphosphate. The protein operates within cofactor biosynthesis; NAD(+) biosynthesis; deamido-NAD(+) from nicotinate D-ribonucleotide: step 1/1. Functionally, catalyzes the reversible adenylation of nicotinate mononucleotide (NaMN) to nicotinic acid adenine dinucleotide (NaAD). The polypeptide is Probable nicotinate-nucleotide adenylyltransferase (Desulfatibacillum aliphaticivorans).